The following is a 55-amino-acid chain: Hirustasin (55 aa).

Intrachain disulfides connect Cys6–Cys17, Cys11–Cys22, Cys24–Cys44, Cys29–Cys48, and Cys33–Cys50. Positions 24–50 (CNEVHCRIRCKYGLKKDENGCEYPCSC) constitute an Antistasin-like domain.

The protein belongs to the protease inhibitor I15 (antistasin) family.

It localises to the secreted. Acts as an inhibitor of tissue kallikrein, trypsin, chymotrypsin and neutrophil cathepsin G. In Hirudo medicinalis (Medicinal leech), this protein is Hirustasin.